The primary structure comprises 804 residues: Probable phosphoketolase (804 aa).

It belongs to the XFP family. It depends on thiamine diphosphate as a cofactor.

This is Probable phosphoketolase from Mycolicibacterium paratuberculosis (strain ATCC BAA-968 / K-10) (Mycobacterium paratuberculosis).